Consider the following 142-residue polypeptide: 3-hydroxyacyl-[acyl-carrier-protein] dehydratase FabZ (142 aa).

H49 is a catalytic residue.

The protein belongs to the thioester dehydratase family. FabZ subfamily.

The protein resides in the cytoplasm. The enzyme catalyses a (3R)-hydroxyacyl-[ACP] = a (2E)-enoyl-[ACP] + H2O. Functionally, involved in unsaturated fatty acids biosynthesis. Catalyzes the dehydration of short chain beta-hydroxyacyl-ACPs and long chain saturated and unsaturated beta-hydroxyacyl-ACPs. The polypeptide is 3-hydroxyacyl-[acyl-carrier-protein] dehydratase FabZ (Deinococcus geothermalis (strain DSM 11300 / CIP 105573 / AG-3a)).